The primary structure comprises 75 residues: Small ribosomal subunit protein bS18 (75 aa).

Belongs to the bacterial ribosomal protein bS18 family. As to quaternary structure, part of the 30S ribosomal subunit. Forms a tight heterodimer with protein bS6.

Its function is as follows. Binds as a heterodimer with protein bS6 to the central domain of the 16S rRNA, where it helps stabilize the platform of the 30S subunit. This Shewanella loihica (strain ATCC BAA-1088 / PV-4) protein is Small ribosomal subunit protein bS18.